Consider the following 629-residue polypeptide: MAKNGGAHGAATLFGLLALASMVKLGFVAGGGHDYAMALRKSILYFQAQRSGVLPPNQRVSWRASSGLFDGKANGVDLVGGYYDAGDNVKFGLPMAFTVTMMSWSILEYGKQMAAAGELRNAMDAVKWGTDYFIKAHPEPDVLYGEVGDGDTDHSCWQRPEDMTTSRQAFRVDPQHPGSDLAAETAAAMAAASIVFRGTYPGYANLLLVHSKQLFEFADKYRGKYDASITVARNYYGSFSGYGDELLWAAAWLFEATEDRSYLEYLAGNGEALGGTGWSINQFGWDVKYPGVQVLAAKFLLQGRAGDHAAALQRYRQNAEFFVCSCVGKGAVNVARTPGGMMYHQRWNNLQFVTSASFLLTVYADFAAISGRGAVHCPAGAAQPFDILKFVKSQVNYILGDNPRGTSYMVGYGASYPRQVHHRGASIVSIKRDPSFVSCQEGYSSWYGREAGNPNLLDGAVVGGPDEYDDFADERDNYEQTEAATYNNAPLLGVLARLAASCGGLKEEEYEQETATPVVNRTSSSSSLPATATAIGIEQNVTGTWARRRRTYYRYAVTVTNRSRGKTVRELHLGVSGLRGRLWGLEEARYGYVPPRWLPALRPGRSLRFVYVQPAPAPANIWVTGYKLV.

Residues methionine 1–glycine 30 form the signal peptide. The Nucleophile role is filled by aspartate 87. Catalysis depends on residues histidine 421, aspartate 473, and glutamate 482. Residues asparagine 520, asparagine 540, and asparagine 561 are each glycosylated (N-linked (GlcNAc...) asparagine).

Belongs to the glycosyl hydrolase 9 (cellulase E) family.

The protein localises to the secreted. It carries out the reaction Endohydrolysis of (1-&gt;4)-beta-D-glucosidic linkages in cellulose, lichenin and cereal beta-D-glucans.. The chain is Endoglucanase 15 from Oryza sativa subsp. japonica (Rice).